Reading from the N-terminus, the 504-residue chain is Maturase K (504 aa).

This sequence belongs to the intron maturase 2 family. MatK subfamily.

The protein resides in the plastid. The protein localises to the chloroplast. Functionally, usually encoded in the trnK tRNA gene intron. Probably assists in splicing its own and other chloroplast group II introns. This chain is Maturase K, found in Arabidopsis thaliana (Mouse-ear cress).